Reading from the N-terminus, the 187-residue chain is Large ribosomal subunit protein uL5 (187 aa).

Belongs to the universal ribosomal protein uL5 family. As to quaternary structure, part of the 50S ribosomal subunit; part of the 5S rRNA/L5/L18/L25 subcomplex. Contacts the 5S rRNA and the P site tRNA. Forms a bridge to the 30S subunit in the 70S ribosome.

This is one of the proteins that bind and probably mediate the attachment of the 5S RNA into the large ribosomal subunit, where it forms part of the central protuberance. In the 70S ribosome it contacts protein S13 of the 30S subunit (bridge B1b), connecting the 2 subunits; this bridge is implicated in subunit movement. Contacts the P site tRNA; the 5S rRNA and some of its associated proteins might help stabilize positioning of ribosome-bound tRNAs. This is Large ribosomal subunit protein uL5 from Gluconobacter oxydans (strain 621H) (Gluconobacter suboxydans).